Here is a 517-residue protein sequence, read N- to C-terminus: GMP synthase [glutamine-hydrolyzing] (517 aa).

Residues K11 to N202 form the Glutamine amidotransferase type-1 domain. C88 (nucleophile) is an active-site residue. Active-site residues include H176 and E178. The 190-residue stretch at W203–R392 folds into the GMPS ATP-PPase domain. S230–S236 is a binding site for ATP.

As to quaternary structure, homodimer.

It carries out the reaction XMP + L-glutamine + ATP + H2O = GMP + L-glutamate + AMP + diphosphate + 2 H(+). The protein operates within purine metabolism; GMP biosynthesis; GMP from XMP (L-Gln route): step 1/1. Its function is as follows. Catalyzes the synthesis of GMP from XMP. The polypeptide is GMP synthase [glutamine-hydrolyzing] (guaA) (Lacticaseibacillus rhamnosus (Lactobacillus rhamnosus)).